Here is a 2240-residue protein sequence, read N- to C-terminus: Nonribisomal peptide synthetase notE (2240 aa).

The tract at residues 22 to 52 (TETMRETLSSSSSPLSLSSITSPLSSASEPP) is disordered. A compositionally biased stretch (low complexity) spans 28-52 (TLSSSSSPLSLSSITSPLSSASEPP). Residues 85–484 (QQRCREAPES…GRKEGQVKIR (400 aa)) are adenylation 1. One can recognise a Carrier 1 domain in the interval 616-692 (PPTTATEHAL…EQARKATPVS (77 aa)). S653 is subject to O-(pantetheine 4'-phosphoryl)serine. Positions 732–1144 (EDIFPCTPLQ…DFASPQDRDL (413 aa)) are condensation 1. An adenylation 2 region spans residues 1167–1564 (QEARQPSREA…GRRDTQLKLR (398 aa)). The Carrier 2 domain maps to 1700 to 1776 (PVSRGPELRL…ELARCTGEEP (77 aa)). S1737 carries the O-(pantetheine 4'-phosphoryl)serine modification. A condensation 2 region spans residues 1845–2159 (FSFHGEVSVE…ILQHQNIDMD (315 aa)). The interval 2008–2027 (CTMPVKATPPTDSDDSRPSA) is disordered.

This sequence belongs to the NRP synthetase family.

The catalysed reaction is L-proline + L-tryptophan + 2 ATP = brevianamide F + 2 AMP + 2 diphosphate + 2 H(+). It participates in alkaloid biosynthesis. Functionally, nonribisomal peptide synthetase; part of the gene cluster that mediates the biosynthesis of notoamide, a fungal indole alkaloid that belongs to a family of natural products containing a characteristic bicyclo[2.2.2]diazaoctane core. The first step of notoamide biosynthesis involves coupling of L-proline and L-tryptophan by the bimodular NRPS notE, to produce cyclo-L-tryptophan-L-proline called brevianamide F. The reverse prenyltransferase notF then acts as a deoxybrevianamide E synthase and converts brevianamide F to deoxybrevianamide E via reverse prenylation at C-2 of the indole ring leading to the bicyclo[2.2.2]diazaoctane core. Deoxybrevianamide E is further hydroxylated at C-6 of the indole ring, likely catalyzed by the cytochrome P450 monooxygenase notG, to yield 6-hydroxy-deoxybrevianamide E. 6-hydroxy-deoxybrevianamide E is a specific substrate of the prenyltransferase notC for normal prenylation at C-7 to produce 6-hydroxy-7-prenyl-deoxybrevianamide, also called notoamide S. As the proposed pivotal branching point in notoamide biosynthesis, notoamide S can be diverted to notoamide E through an oxidative pyran ring closure putatively catalyzed by either notH cytochrome P450 monooxygenase or the notD FAD-linked oxidoreductase. This step would be followed by an indole 2,3-epoxidation-initiated pinacol-like rearrangement catalyzed by the notB FAD-dependent monooxygenase leading to the formation of notoamide C and notoamide D. On the other hand notoamide S is converted to notoamide T by notH (or notD), a bifunctional oxidase that also functions as the intramolecular Diels-Alderase responsible for generation of (+)-notoamide T. To generate antipodal (-)-notoaminide T, notH' (or notD') in Aspergillus versicolor is expected to catalyze a Diels-Alder reaction leading to the opposite stereochemistry. The remaining oxidoreductase notD (or notH) likely catalyzes the oxidative pyran ring formation to yield (+)-stephacidin A. The FAD-dependent monooxygenase notI is highly similar to notB and is predicted to catalyze a similar conversion from (+)-stephacidin A to (-)-notoamide B via the 2,3-epoxidation of (+)-stephacidin A followed by a pinacol-type rearrangement. Finally, it remains unclear which enzyme could be responsible for the final hydroxylation steps leading to notoamide A and sclerotiamide. This Aspergillus sp. (strain MF297-2) protein is Nonribisomal peptide synthetase notE.